A 182-amino-acid polypeptide reads, in one-letter code: Putative manganese efflux pump MntP (182 aa).

A run of 6 helical transmembrane segments spans residues 6–26 (LIPL…VSLG), 37–57 (ILYI…IGMV), 71–91 (HFAG…SSIL), 101–121 (IGIS…SVGL), 131–151 (IITI…GLLI), and 162–182 (YGEI…LFPI).

This sequence belongs to the MntP (TC 9.B.29) family.

It localises to the cell membrane. Functionally, probably functions as a manganese efflux pump. The chain is Putative manganese efflux pump MntP from Bacillus anthracis (strain A0248).